We begin with the raw amino-acid sequence, 2278 residues long: Protein Ycf2 (2278 aa).

1632-1639 (GSIGTGRS) is a binding site for ATP.

Belongs to the Ycf2 family.

It localises to the plastid. The protein localises to the chloroplast stroma. In terms of biological role, probable ATPase of unknown function. Its presence in a non-photosynthetic plant (Epifagus virginiana) and experiments in tobacco indicate that it has an essential function which is probably not related to photosynthesis. This chain is Protein Ycf2, found in Solanum tuberosum (Potato).